The sequence spans 505 residues: 4-trimethylaminobutyraldehyde dehydrogenase (505 aa).

NAD(+)-binding positions include lysine 191 and 243–247; that span reads GSVPT. The Proton acceptor role is filled by glutamate 265. Cysteine 299 acts as the Nucleophile in catalysis. Residue glutamate 402 participates in NAD(+) binding.

It belongs to the aldehyde dehydrogenase family. Homotetramer. In terms of tissue distribution, constitutively expressed in all organs tested: brain, eye, gill, GI, heart, liver, kidney, muscle, skin, testis and ovary.

The protein localises to the cytoplasm. It localises to the cytosol. It carries out the reaction 4-(trimethylamino)butanal + NAD(+) + H2O = 4-(trimethylamino)butanoate + NADH + 2 H(+). It catalyses the reaction an aldehyde + NAD(+) + H2O = a carboxylate + NADH + 2 H(+). It functions in the pathway amine and polyamine biosynthesis; carnitine biosynthesis. In terms of biological role, converts gamma-trimethylaminobutyraldehyde into gamma-butyrobetaine with high efficiency (in vitro). Can catalyze the irreversible oxidation of a broad range of aldehydes to the corresponding acids in an NAD-dependent reaction, but with low efficiency. The protein is 4-trimethylaminobutyraldehyde dehydrogenase (aldh9A1) of Oryzias latipes (Japanese rice fish).